The following is a 484-amino-acid chain: GRIP domain-containing protein RUD3 (484 aa).

Positions 1-15 (MGKNKKKTGKKAKSH) are enriched in basic residues. A disordered region spans residues 1–75 (MGKNKKKTGK…GVDKQKVNDG (75 aa)). Positions 16 to 30 (PHVEDVDETVNKPEE) are enriched in basic and acidic residues. Residues Ser-55 and Ser-64 each carry the phosphoserine modification. The span at 61 to 72 (KDLSEGVDKQKV) shows a compositional bias: basic and acidic residues. A coiled-coil region spans residues 84–383 (LEDKKAGDEM…LQIGKLRHEA (300 aa)). The region spanning 401–452 (SDSESVDKELISNLLISFVSIPRADPRKFEVLELLSNFLNWDEDKKQQAGLI) is the GRIP domain. Ser-468 carries the phosphoserine modification.

The protein resides in the golgi apparatus lumen. Its function is as follows. Involved in the structural organization of the cis-Golgi and in vesicle targeting/fusion stages of ER to Golgi transport. The polypeptide is GRIP domain-containing protein RUD3 (RUD3) (Saccharomyces cerevisiae (strain ATCC 204508 / S288c) (Baker's yeast)).